The sequence spans 247 residues: PF03932 family protein CutC (247 aa).

Residues 205–222 (KSTRPSLMESNSSAQMGS) show a composition bias toward polar residues. The tract at residues 205 to 226 (KSTRPSLMESNSSAQMGSNDVD) is disordered.

The protein belongs to the CutC family.

The protein localises to the cytoplasm. This is PF03932 family protein CutC from Vibrio atlanticus (strain LGP32) (Vibrio splendidus (strain Mel32)).